A 170-amino-acid chain; its full sequence is Archaemetzincin (170 aa).

Histidine 110 is a Zn(2+) binding site. Glutamate 111 functions as the Proton acceptor in the catalytic mechanism. Zn(2+)-binding residues include histidine 114, histidine 120, cysteine 121, cysteine 125, cysteine 144, and cysteine 147.

The protein belongs to the peptidase M54 family. In terms of assembly, monomer. Zn(2+) is required as a cofactor.

Its function is as follows. Probable zinc metalloprotease whose natural substrate is unknown. The chain is Archaemetzincin from Nanoarchaeum equitans (strain Kin4-M).